The chain runs to 332 residues: Protein phosphatase PTC7 homolog fig (332 aa).

Positions lysine 70 to valine 325 constitute a PPM-type phosphatase domain. Residues aspartate 102, glycine 103, and aspartate 247 each contribute to the Mn(2+) site.

Belongs to the PP2C family. It depends on Mg(2+) as a cofactor. Mn(2+) is required as a cofactor.

The enzyme catalyses O-phospho-L-seryl-[protein] + H2O = L-seryl-[protein] + phosphate. It carries out the reaction O-phospho-L-threonyl-[protein] + H2O = L-threonyl-[protein] + phosphate. The chain is Protein phosphatase PTC7 homolog fig from Drosophila ananassae (Fruit fly).